Here is a 274-residue protein sequence, read N- to C-terminus: 3-methyl-2-oxobutanoate hydroxymethyltransferase (274 aa).

Asp-49 and Asp-88 together coordinate Mg(2+). 3-methyl-2-oxobutanoate contacts are provided by residues 49 to 50 (DS), Asp-88, and Lys-118. Position 120 (Glu-120) interacts with Mg(2+). The active-site Proton acceptor is the Glu-187.

The protein belongs to the PanB family. As to quaternary structure, homodecamer; pentamer of dimers. Mg(2+) is required as a cofactor.

It is found in the cytoplasm. The enzyme catalyses 3-methyl-2-oxobutanoate + (6R)-5,10-methylene-5,6,7,8-tetrahydrofolate + H2O = 2-dehydropantoate + (6S)-5,6,7,8-tetrahydrofolate. Its pathway is cofactor biosynthesis; (R)-pantothenate biosynthesis; (R)-pantoate from 3-methyl-2-oxobutanoate: step 1/2. Catalyzes the reversible reaction in which hydroxymethyl group from 5,10-methylenetetrahydrofolate is transferred onto alpha-ketoisovalerate to form ketopantoate. This Rhodopseudomonas palustris (strain BisB18) protein is 3-methyl-2-oxobutanoate hydroxymethyltransferase.